Consider the following 393-residue polypeptide: Major outer membrane porin, serovar E (393 aa).

A signal peptide spans 1–22; it reads MKKLLKSVLVFAALSSASSLQA.

It belongs to the chlamydial porin (CP) (TC 1.B.2) family. As to quaternary structure, part of a disulfide cross-linked outer membrane complex (COMC) composed of the major outer membrane porin (MOMP), the small cysteine-rich protein (OmcA) and the large cysteine-rich periplasmic protein (OmcB).

It localises to the cell outer membrane. In terms of biological role, in elementary bodies (EBs, the infectious stage, which is able to survive outside the host cell) provides the structural integrity of the outer envelope through disulfide cross-links with the small cysteine-rich protein and the large cysteine-rich periplasmic protein. It has been described in publications as the Sarkosyl-insoluble COMC (Chlamydia outer membrane complex), and serves as the functional equivalent of peptidoglycan. Permits diffusion of specific solutes through the outer membrane. The sequence is that of Major outer membrane porin, serovar E (ompA) from Chlamydia trachomatis.